Reading from the N-terminus, the 461-residue chain is ATP synthase subunit beta 2 (461 aa).

151-158 is a binding site for ATP; sequence GGAGVGKT.

Belongs to the ATPase alpha/beta chains family. In terms of assembly, F-type ATPases have 2 components, CF(1) - the catalytic core - and CF(0) - the membrane proton channel. CF(1) has five subunits: alpha(3), beta(3), gamma(1), delta(1), epsilon(1). CF(0) has three main subunits: a(1), b(2) and c(9-12). The alpha and beta chains form an alternating ring which encloses part of the gamma chain. CF(1) is attached to CF(0) by a central stalk formed by the gamma and epsilon chains, while a peripheral stalk is formed by the delta and b chains.

It localises to the cell inner membrane. The catalysed reaction is ATP + H2O + 4 H(+)(in) = ADP + phosphate + 5 H(+)(out). In terms of biological role, produces ATP from ADP in the presence of a proton gradient across the membrane. The catalytic sites are hosted primarily by the beta subunits. The sequence is that of ATP synthase subunit beta 2 from Pseudoalteromonas atlantica (strain T6c / ATCC BAA-1087).